Here is a 133-residue protein sequence, read N- to C-terminus: NADPH-dependent 7-cyano-7-deazaguanine reductase (133 aa).

The active-site Thioimide intermediate is Cys-46. Asp-53 acts as the Proton donor in catalysis. Substrate is bound by residues 68–70 (VEL) and 87–88 (HE).

The protein belongs to the GTP cyclohydrolase I family. QueF type 1 subfamily.

Its subcellular location is the cytoplasm. It carries out the reaction 7-aminomethyl-7-carbaguanine + 2 NADP(+) = 7-cyano-7-deazaguanine + 2 NADPH + 3 H(+). The protein operates within tRNA modification; tRNA-queuosine biosynthesis. Its function is as follows. Catalyzes the NADPH-dependent reduction of 7-cyano-7-deazaguanine (preQ0) to 7-aminomethyl-7-deazaguanine (preQ1). The protein is NADPH-dependent 7-cyano-7-deazaguanine reductase of Parasynechococcus marenigrum (strain WH8102).